A 194-amino-acid chain; its full sequence is CASP-like protein 4D1 (194 aa).

The Cytoplasmic segment spans residues 1–10; that stretch reads MASRTVLLPS. The helical transmembrane segment at 11-31 threads the bilayer; that stretch reads AVLILRLLSLGLLAASLALIA. Residues 32-55 lie on the Extracellular side of the membrane; that stretch reads ADKLNVDSDPPQRYTFRDVYAYRY. A helical transmembrane segment spans residues 56-76; the sequence is VLAVAVIGCAYTLLQLPLAAV. Residues 77-94 are Cytoplasmic-facing; it reads SIIASGNNKRGIGAGGGS. A helical transmembrane segment spans residues 95–115; sequence VAVALLVLVLLADVVFALLLA. Residues 116-161 are Extracellular-facing; sequence TGAAAGFAFTYDVKRYLDGQFDDDSIGTPEVDKLHRDMDKFFDLAY. A helical membrane pass occupies residues 162-182; sequence AAAGLMLAAAACMALVIMLSV. The Cytoplasmic portion of the chain corresponds to 183–194; that stretch reads YSLARQVRSDYI.

The protein belongs to the Casparian strip membrane proteins (CASP) family. Homodimer and heterodimers.

It localises to the cell membrane. In Sorghum bicolor (Sorghum), this protein is CASP-like protein 4D1.